The sequence spans 435 residues: Putative F-box/kelch-repeat protein At1g13200 (435 aa).

Residues 1–29 (MKDAEKREVIASSSLQRKRNRGRRLRKRR) form a disordered region. Over residues 16 to 29 (QRKRNRGRRLRKRR) the composition is skewed to basic residues. The F-box domain maps to 37 to 82 (LMVPSSLPNDVLEEIFLRFPVKALIRLKSLSKQWRSTIESRSFEER). Kelch repeat units follow at residues 164 to 217 (SVYV…DYKL), 224 to 270 (DKYI…PASA), 273 to 317 (SVYW…HIDM), and 322 to 368 (NSLC…EKRD).

The polypeptide is Putative F-box/kelch-repeat protein At1g13200 (Arabidopsis thaliana (Mouse-ear cress)).